Consider the following 101-residue polypeptide: Small ribosomal subunit protein uS14 (101 aa).

It belongs to the universal ribosomal protein uS14 family. In terms of assembly, part of the 30S ribosomal subunit. Contacts proteins S3 and S10.

Binds 16S rRNA, required for the assembly of 30S particles and may also be responsible for determining the conformation of the 16S rRNA at the A site. The protein is Small ribosomal subunit protein uS14 of Shewanella woodyi (strain ATCC 51908 / MS32).